Here is a 725-residue protein sequence, read N- to C-terminus: Sesterterpene synthase btcA (725 aa).

Residues 1 to 333 (MANPPVTEWK…CANCPRHHAW (333 aa)) are terpene cyclase. Asp100 is a Mg(2+) binding site. Substrate contacts are provided by residues Asp100, Asn236, 240–244 (SWGRE), and 329–330 (RH). A DDXXD 1 motif is present at residues 100–104 (DDATE). An NSE/DTE motif is present at residues 236 to 244 (NDYWSWGRE). Positions 334 to 722 (KEQDQAVHAV…MLYVLLQTLS (389 aa)) are prenyltransferase. Residues 352–426 (VEAQSPSSAT…PSSLHLLKSP (75 aa)) are disordered. The span at 355-364 (QSPSSATHTA) shows a compositional bias: polar residues. Residues 375–419 (APSPISSPSSSSSAKPSSSSAADSSSCTSTSQHSPSETDSTPPSS) show a composition bias toward low complexity. Isopentenyl diphosphate is bound by residues Lys442, Arg445, and His474. 2 residues coordinate Mg(2+): Asp481 and Asp485. Residues 481–485 (DDIQD) carry the DDXXD 2 motif. Arg490 contacts dimethylallyl diphosphate. Arg491 contacts isopentenyl diphosphate. The dimethylallyl diphosphate site is built by Lys568, Thr569, Gln604, Asn611, Lys621, and Lys631.

It in the N-terminal section; belongs to the terpene synthase family. The protein in the C-terminal section; belongs to the FPP/GGPP synthase family. As to quaternary structure, hexamer. Mg(2+) is required as a cofactor.

The catalysed reaction is isopentenyl diphosphate + (2E,6E)-farnesyl diphosphate = (2E,6E,10E)-geranylgeranyl diphosphate + diphosphate. It carries out the reaction isopentenyl diphosphate + (2E,6E,10E)-geranylgeranyl diphosphate = (2E,6E,10E,14E)-geranylfarnesyl diphosphate + diphosphate. It participates in secondary metabolite biosynthesis; terpenoid biosynthesis. Its function is as follows. Bifunctional terpene synthase; part of the gene cluster that mediates the biosynthesis of betaestacins. The bifunctional terpene synthase btcA converts isopentenyl diphosphate (IPP) and dimethylallyl diphosphate (DMAPP) into the sesterterpene betaestacin I. The C-terminal prenyltransferase (PT) domain of btcA catalyzes formation of GFPP, whereas the N-terminal terpene cyclase (TC) domain catalyzes the cyclization of GFPP into betaestacin I. The cytochrome P450 monooxygenase btcB is then responsible for the six-step oxidation of betaestacin I to yield betaestacin II. The roles of the cytochrome P450 monooxygenase btcC and the alpha-ketoglutarate-dependent dioxygenase btcD have not been identified yet. The sequence is that of Sesterterpene synthase btcA from Neocamarosporium betae (Beet black rot fungus).